Here is a 1257-residue protein sequence, read N- to C-terminus: Bifunctional autolysin (1257 aa).

A signal peptide spans 1–29 (MAKKFNYKLPSMVALTLVGSAVTAHQVQA). Positions 99–137 (QVNGDTRATQSTTSNNAKPVTKSTNTTAPKTNNNVTSAG) are enriched in polar residues. Disordered regions lie at residues 99 to 150 (QVNG…NSEN), 173 to 217 (AAPK…KYKP), and 417 to 441 (TQST…PSTG). 2 stretches are compositionally biased toward low complexity: residues 173 to 208 (AAPK…AAAP) and 419 to 440 (STTT…TPST). Positions 197 to 776 (ASAQPRSAAA…AVAQPKTAVK (580 aa)) are N-acetylmuramoyl-L-alanine amidase. GW domains follow at residues 444–518 (TVAA…YNTA), 520–594 (SPVN…DTAK), 613–687 (TVSS…YNNA), 689–763 (SPVN…VPAA), 785–860 (TTQT…VQNL), 862–937 (KEVK…APTA), and 944–1018 (AAKD…KELI). The endo-beta-N-acetylglucosaminidase stretch occupies residues 777-1257 (AYAVTKPQTT…GKYFDIPQYK (481 aa)).

The protein in the N-terminal section; belongs to the N-acetylmuramoyl-L-alanine amidase 2 family. In the C-terminal section; belongs to the glycosyl hydrolase 73 family. In terms of assembly, oligomer; forms a ring structure at the cell surface which is important for efficient partitioning of daughter cells after cell division. In terms of processing, undergoes proteolytic processing to generate the two extracellular lytic enzymes, probably at the septal region on the cell surface.

It localises to the secreted. It catalyses the reaction Hydrolyzes the link between N-acetylmuramoyl residues and L-amino acid residues in certain cell-wall glycopeptides.. It carries out the reaction an N(4)-(oligosaccharide-(1-&gt;3)-[oligosaccharide-(1-&gt;6)]-beta-D-Man-(1-&gt;4)-beta-D-GlcNAc-(1-&gt;4)-alpha-D-GlcNAc)-L-asparaginyl-[protein] + H2O = an oligosaccharide-(1-&gt;3)-[oligosaccharide-(1-&gt;6)]-beta-D-Man-(1-&gt;4)-D-GlcNAc + N(4)-(N-acetyl-beta-D-glucosaminyl)-L-asparaginyl-[protein]. In terms of biological role, endohydrolysis of the di-N-acetylchitobiosyl unit in high-mannose glycopeptides and glycoproteins containing the -[(Man)5(GlcNAc)2]-Asn structure. One N-acetyl-D-glucosamine residue remains attached to the protein; the rest of the oligosaccharide is released intact. Cleaves the peptidoglycan connecting the daughter cells at the end of the cell division cycle, resulting in the separation of the two newly divided cells. Acts as an autolysin in penicillin-induced lysis. The polypeptide is Bifunctional autolysin (atl) (Staphylococcus aureus (strain MRSA252)).